The chain runs to 130 residues: ATP synthase epsilon chain (130 aa).

This sequence belongs to the ATPase epsilon chain family. In terms of assembly, F-type ATPases have 2 components, CF(1) - the catalytic core - and CF(0) - the membrane proton channel. CF(1) has five subunits: alpha(3), beta(3), gamma(1), delta(1), epsilon(1). CF(0) has three main subunits: a, b and c.

It is found in the cell membrane. In terms of biological role, produces ATP from ADP in the presence of a proton gradient across the membrane. In Mycoplasmoides gallisepticum (strain R(low / passage 15 / clone 2)) (Mycoplasma gallisepticum), this protein is ATP synthase epsilon chain (atpC).